Here is a 612-residue protein sequence, read N- to C-terminus: Threonine--tRNA ligase (612 aa).

A catalytic region spans residues Asp-218–Pro-509. Zn(2+)-binding residues include Cys-310, His-361, and His-486.

The protein belongs to the class-II aminoacyl-tRNA synthetase family. In terms of assembly, homodimer. The cofactor is Zn(2+).

It is found in the cytoplasm. It catalyses the reaction tRNA(Thr) + L-threonine + ATP = L-threonyl-tRNA(Thr) + AMP + diphosphate + H(+). In terms of biological role, catalyzes the attachment of threonine to tRNA(Thr) in a two-step reaction: L-threonine is first activated by ATP to form Thr-AMP and then transferred to the acceptor end of tRNA(Thr). Also edits incorrectly charged L-seryl-tRNA(Thr). The protein is Threonine--tRNA ligase of Helicobacter pylori (strain P12).